Reading from the N-terminus, the 794-residue chain is FT-interacting protein 1 (794 aa).

Residues 1-27 (MAAKDGAKSQEDYKLKDMKPELGERWP) are compositionally biased toward basic and acidic residues. Residues 1 to 34 (MAAKDGAKSQEDYKLKDMKPELGERWPHGGQRGG) form a disordered region. C2 domains follow at residues 37–158 (WIGS…PQWY), 198–321 (VQGE…SKWY), and 364–492 (YISD…THSY). Residues D76, D123, E125, and E131 each coordinate Ca(2+). 4 helical membrane passes run 510 to 532 (LAVR…PLLP), 595 to 615 (IVSV…VCYW), 619 to 639 (LTTI…ELIL), and 737 to 757 (LFVI…FKII).

Belongs to the MCTP family. Interacts with FT in phloem companion cells. Ca(2+) serves as cofactor. Expressed in the vascular tissues of roots, cotyledons and rosette leaves. Specifically located in the phloem including companion cells. Observed in flowers. Not detected in the shoot apical meristem.

Its subcellular location is the endoplasmic reticulum membrane. The protein localises to the cell junction. The protein resides in the plasmodesma. Functionally, involved in the export of FT from the phloem companion cells to the sieve elements through the plasmodesmata. Regulates flowering time under long days. May function as a signaling molecule by regulating the trafficking of other regulators. In Arabidopsis thaliana (Mouse-ear cress), this protein is FT-interacting protein 1.